Reading from the N-terminus, the 118-residue chain is Transcriptional regulator WhiB4 (118 aa).

The 4Fe-4S Wbl-type domain occupies 36-92; it reads LCRTTDPDELFVRGAAQRKAAVICRHCPVMQECAADALDNKVEFGVWGGMTERQRRA. Cysteine 37, cysteine 59, cysteine 62, and cysteine 68 together coordinate [4Fe-4S] cluster. 2 disulfide bridges follow: cysteine 37/cysteine 68 and cysteine 59/cysteine 62.

Belongs to the WhiB family. It depends on [4Fe-4S] cluster as a cofactor. The Fe-S cluster can be nitrosylated by nitric oxide (NO). Post-translationally, upon Fe-S cluster removal intramolecular disulfide bonds are formed.

The protein resides in the cytoplasm. Functionally, acts as a transcriptional regulator. Probably redox-responsive. The apo- but not holo-form probably binds DNA. The protein is Transcriptional regulator WhiB4 (whiB4) of Mycobacterium tuberculosis (strain CDC 1551 / Oshkosh).